Reading from the N-terminus, the 35-residue chain is Cytochrome b6-f complex subunit 5 (35 aa).

Residues 5–25 (LLCGIVLGLIPVTLTGLFVAA) form a helical membrane-spanning segment.

This sequence belongs to the PetG family. In terms of assembly, the 4 large subunits of the cytochrome b6-f complex are cytochrome b6, subunit IV (17 kDa polypeptide, PetD), cytochrome f and the Rieske protein, while the 4 small subunits are PetG, PetL, PetM and PetN. The complex functions as a dimer.

It localises to the plastid. Its subcellular location is the organellar chromatophore thylakoid membrane. Its function is as follows. Component of the cytochrome b6-f complex, which mediates electron transfer between photosystem II (PSII) and photosystem I (PSI), cyclic electron flow around PSI, and state transitions. PetG is required for either the stability or assembly of the cytochrome b6-f complex. This is Cytochrome b6-f complex subunit 5 from Paulinella chromatophora.